We begin with the raw amino-acid sequence, 292 residues long: Probable ABC transporter permease protein PH1215 (292 aa).

Helical transmembrane passes span 10–30 (IILFLIPALILIGIFVYFAVV), 72–92 (LLLILLFVPGSLLLGLFLAIL), 106–126 (IYVLPFALSFVVTATLWAWMY), 160–180 (IIIALIWQFSGYTMIIYLAGI), 215–235 (LSAFVVLMVFSLKAFDFIWVL), and 261–281 (FAYGAAIATILLLMALVVVLP). The region spanning 68–284 (LRNNLLLILL…ALVVVLPYLY (217 aa)) is the ABC transmembrane type-1 domain.

The protein belongs to the binding-protein-dependent transport system permease family. MalFG subfamily.

The protein resides in the cell membrane. In terms of biological role, probably part of a binding-protein-dependent transport system PH1214/15/16. Probably responsible for the translocation of the substrate across the membrane. The sequence is that of Probable ABC transporter permease protein PH1215 from Pyrococcus horikoshii (strain ATCC 700860 / DSM 12428 / JCM 9974 / NBRC 100139 / OT-3).